The sequence spans 337 residues: Peptide methionine sulfoxide reductase MsrA/MsrB (337 aa).

A peptide methionine sulfoxide reductase A region spans residues 28 to 181; sequence KDIYLAGGCF…PGGYCHVDLS (154 aa). Cys36 is a catalytic residue. Positions 198–321 constitute a MsrB domain; it reads KDELKAKLSD…NGASLKFIPL (124 aa). The active-site Nucleophile is Cys310.

It in the N-terminal section; belongs to the MsrA Met sulfoxide reductase family. The protein in the C-terminal section; belongs to the MsrB Met sulfoxide reductase family.

The catalysed reaction is L-methionyl-[protein] + [thioredoxin]-disulfide + H2O = L-methionyl-(S)-S-oxide-[protein] + [thioredoxin]-dithiol. It carries out the reaction [thioredoxin]-disulfide + L-methionine + H2O = L-methionine (S)-S-oxide + [thioredoxin]-dithiol. It catalyses the reaction L-methionyl-[protein] + [thioredoxin]-disulfide + H2O = L-methionyl-(R)-S-oxide-[protein] + [thioredoxin]-dithiol. In terms of biological role, has an important function as a repair enzyme for proteins that have been inactivated by oxidation. Catalyzes the reversible oxidation-reduction of methionine sulfoxide in proteins to methionine. The polypeptide is Peptide methionine sulfoxide reductase MsrA/MsrB (msrAB) (Campylobacter fetus).